The chain runs to 493 residues: MTIEGGPKRSQKVVFLQPVLTSLVALLAAGACLSPTVALAQDQLSPDEVAALRSEIATLRAQLQKMEQRLDAVTSAPQTTAPAAPPAIQPPAPVATTVAKASPPPAKPASAPTEITWKGSPQFTSGDRSFKAKGRIQIDVGQVDAPKGLVDRGLGYGAEMRRIRLGGEGDLGAGVGYELELELSDNAVKLVDTFVTYRTGPWLVTVGNHNPFQSLDELTGDTVGAFMERAAFTDAFNFERRLGVSAQYEKGPWVLQGGLFADDIDALSNSSDGPEGGDENNSYGLDGRAVYAPKLGQTQLHLGASAHWRTLKRVTDAGTRYRQRPYVHASNSRLIGTAVLPVEEEVHYGLEAAFVSGRWHGAAETYWQAAELTTGTRPTFFGGYAELGYFLTGDTRGYRGGQFSRTRPSKPLGGGGVGALQLNVRYDYLDLNDRGVVGGKQDAWLAALIWQPLDHLRFHLNYGLLDYQGATPLRNGDRDYRVNVAGARMELDF.

The disordered stretch occupies residues 96–124 (TTVAKASPPPAKPASAPTEITWKGSPQFT).

This is an uncharacterized protein from Caulobacter vibrioides (strain ATCC 19089 / CIP 103742 / CB 15) (Caulobacter crescentus).